Consider the following 360-residue polypeptide: Histidinol-phosphate aminotransferase (360 aa).

Position 222 is an N6-(pyridoxal phosphate)lysine (Lys222).

It belongs to the class-II pyridoxal-phosphate-dependent aminotransferase family. Histidinol-phosphate aminotransferase subfamily. In terms of assembly, homodimer. The cofactor is pyridoxal 5'-phosphate.

The enzyme catalyses L-histidinol phosphate + 2-oxoglutarate = 3-(imidazol-4-yl)-2-oxopropyl phosphate + L-glutamate. The protein operates within amino-acid biosynthesis; L-histidine biosynthesis; L-histidine from 5-phospho-alpha-D-ribose 1-diphosphate: step 7/9. The protein is Histidinol-phosphate aminotransferase of Listeria monocytogenes serotype 4b (strain CLIP80459).